An 873-amino-acid chain; its full sequence is Putative receptor-like protein kinase At5g39000 (873 aa).

Residues 1-21 (MIRHALLIFSILVSTPIVGEG) form the signal peptide. Residues 22–445 (ATSTYEPTDV…KNKSHILPIT (424 aa)) are Extracellular-facing. N-linked (GlcNAc...) asparagine glycans are attached at residues Asn49, Asn64, Asn138, Asn168, Asn216, Asn266, Asn300, Asn340, and Asn437. A helical membrane pass occupies residues 446–466 (LAVVGSLVVLAMFVVGVLVIM). The Cytoplasmic segment spans residues 467-873 (KKKKKSKPST…FSEINEPKAR (407 aa)). Residues 472–494 (SKPSTNSSWCPLPHGTDSTNTKP) form a disordered region. The 286-residue stretch at 518-803 (FEDKLIIGVG…EFALQLHETA (286 aa)) folds into the Protein kinase domain. Residues 524 to 532 (IGVGGFGSV) and Lys547 contribute to the ATP site. Asp646 acts as the Proton acceptor in catalysis. Residues 813 to 843 (LDLMPSGEVGTTTDGEDDLFSRTTGHVGKST) form a disordered region. The segment covering 833 to 843 (SRTTGHVGKST) has biased composition (polar residues).

Belongs to the protein kinase superfamily. Ser/Thr protein kinase family.

The protein resides in the membrane. This Arabidopsis thaliana (Mouse-ear cress) protein is Putative receptor-like protein kinase At5g39000.